A 226-amino-acid polypeptide reads, in one-letter code: MAWMIRDVPKDSRPRERLLSSGPESLSDHELIAILLRTGTKEESVVQLAQRLLRHFEGLRPLKDATVEEMTNIKGIGPTKAVQILAALELGRRIHQSGCADRYVIRCPEDGAKYVMEDMRFLSQEHFVAIYLNTKNQVIYRKTVFIGSLNASIVHPREVFKEAIKRSAASVICVHNHPSGDPTPSREDIDVTKRLAECGRIIGIELLDHLIIGDQKFISLKEKGYV.

Residues 104–226 enclose the MPN domain; it reads VIRCPEDGAK…FISLKEKGYV (123 aa). Residues His-175, His-177, and Asp-188 each coordinate Zn(2+). Residues 175 to 188 carry the JAMM motif motif; sequence HNHPSGDPTPSRED.

Belongs to the UPF0758 family.

In Geobacillus kaustophilus (strain HTA426), this protein is UPF0758 protein GK2618.